The primary structure comprises 125 residues: uncharacterized protein (125 aa).

The region spanning 14–112 (CPVEFTLDVI…WGESNRDVLE (99 aa)) is the HTH hxlR-type domain.

This is an uncharacterized protein from Bacillus subtilis (strain 168).